The sequence spans 242 residues: Biosynthetic peptidoglycan transglycosylase (242 aa).

Residues 19-39 traverse the membrane as a helical segment; the sequence is ILAALAVFWGGGIALFSVVPV.

Belongs to the glycosyltransferase 51 family.

Its subcellular location is the cell inner membrane. It carries out the reaction [GlcNAc-(1-&gt;4)-Mur2Ac(oyl-L-Ala-gamma-D-Glu-L-Lys-D-Ala-D-Ala)](n)-di-trans,octa-cis-undecaprenyl diphosphate + beta-D-GlcNAc-(1-&gt;4)-Mur2Ac(oyl-L-Ala-gamma-D-Glu-L-Lys-D-Ala-D-Ala)-di-trans,octa-cis-undecaprenyl diphosphate = [GlcNAc-(1-&gt;4)-Mur2Ac(oyl-L-Ala-gamma-D-Glu-L-Lys-D-Ala-D-Ala)](n+1)-di-trans,octa-cis-undecaprenyl diphosphate + di-trans,octa-cis-undecaprenyl diphosphate + H(+). It participates in cell wall biogenesis; peptidoglycan biosynthesis. Functionally, peptidoglycan polymerase that catalyzes glycan chain elongation from lipid-linked precursors. The polypeptide is Biosynthetic peptidoglycan transglycosylase (Salmonella typhi).